The primary structure comprises 401 residues: Probable plasmid-partitioning protein ParB (401 aa).

A disordered region spans residues 232-272 (KTRGKENARDKAAAVKEEVKPSKKPKADNGEKTPKGRSHEE).

This sequence belongs to the ParB family.

The chain is Probable plasmid-partitioning protein ParB from Xylella fastidiosa (strain 9a5c).